The chain runs to 434 residues: MEVRPKESWNHADFVHCEDTESVPGKPSVNADEEVGGPQICRVCGDKATGYHFNVMTCEGCKGFFRRAMKRNARLRCPFRKGACEITRKTRRQCQACRLRKCLESGMKKEMIMSDEAVEERRALIKRKKSERTGTQPLGVQGLTEEQRMMIRELMDAQMKTFDTTFSHFKNFRLPGVLSSGCELPESLQAPSREEAAKWSQVRKDLCSLKVSLQLRGEDGSVWNYKPPADSGGKEIFSLLPHMADMSTYMFKGIISFAKVISYFRDLPIEDQISLLKGAAFELCQLRFNTVFNAETGTWECGRLSYCLEDTAGGFQQLLLEPMLKFHYMLKKLQLHEEEYVLMQAISLFSPDRPGVLQHRVVDQLQEQFAITLKSYIECNRPQPAHRFLFLKIMAMLTELRSINAQHTQRLLRIQDIHPFATPLMQELFGITGS.

A DNA-binding region (nuclear receptor) is located at residues 38–107 (PQICRVCGDK…RLRKCLESGM (70 aa)). NR C4-type zinc fingers lie at residues 41 to 61 (CRVC…CEGC) and 77 to 102 (CPFR…LRKC). Residues 66–92 (RRAMKRNARLRCPFRKGACEITRKTRR) carry the Bipartite nuclear localization signal motif. The segment at 108-145 (KKEMIMSDEAVEERRALIKRKKSERTGTQPLGVQGLTE) is hinge. Residues 146–433 (EQRMMIRELM…LMQELFGITG (288 aa)) form the NR LBD domain. Hyperforin contacts are provided by residues Ser247, 285–288 (QLRF), and His407.

The protein belongs to the nuclear hormone receptor family. NR1 subfamily. Heterodimer with RXR. Interacts with NCOA1. Interacts (via domain NR LBD) with CRY1 and CRY2 in a ligand-dependent manner. In terms of tissue distribution, expressed in liver, colon and small intestine.

Its subcellular location is the nucleus. Functionally, nuclear receptor that binds and is activated by variety of endogenous and xenobiotic compounds. Transcription factor that activates the transcription of multiple genes involved in the metabolism and secretion of potentially harmful xenobiotics, drugs and endogenous compounds. Activated by the antibiotic rifampicin and various plant metabolites, such as hyperforin, guggulipid, colupulone, and isoflavones. Response to specific ligands is species-specific. Activated by naturally occurring steroids, such as pregnenolone and progesterone. Binds to a response element in the promoters of the CYP3A4 and ABCB1/MDR1 genes. In Homo sapiens (Human), this protein is Nuclear receptor subfamily 1 group I member 2 (NR1I2).